A 492-amino-acid chain; its full sequence is Acyl-CoA-binding domain-containing protein 5 (492 aa).

In terms of domain architecture, ACB spans 8 to 97 (HATRFEAAVK…MKKILESMPM (90 aa)). An acyl-CoA is bound by residues 19-28 (IQSLPKNGSF), 39-43 (YSFYK), lysine 65, and tyrosine 84. Disordered stretches follow at residues 141-162 (AVNGKAESSDSGAESEEEGLRE) and 335-399 (VKCG…DRGP). The span at 153-162 (AESEEEGLRE) shows a compositional bias: acidic residues. The span at 335–360 (VKCGGEDGKASNGAPHKEKKDGEKAD) shows a compositional bias: basic and acidic residues. Positions 378 to 388 (GSQGGQMGNGG) are enriched in gly residues. The span at 389–399 (DGERWGSDRGP) shows a compositional bias: basic and acidic residues. Residues 405 to 431 (EQIAVVLMRLQEDMQNVLQRLHMLEAV) are a coiled coil. A helical membrane pass occupies residues 464 to 484 (GVLAFAIVWPFIAQWLVHVYL).

The protein belongs to the ATG37 family.

The protein localises to the peroxisome membrane. In terms of biological role, acyl-CoA binding protein which acts as the peroxisome receptor for pexophagy but is dispensable for aggrephagy and nonselective autophagy. Binds medium- and long-chain acyl-CoA esters. In Gallus gallus (Chicken), this protein is Acyl-CoA-binding domain-containing protein 5 (ACBD5).